The following is a 255-amino-acid chain: Tabinhibitin 2 (255 aa).

Residues Met-1–Ala-23 form the signal peptide. The Cell attachment site motif lies at Arg-32 to Asp-34. Residues Leu-67–Phe-211 enclose the SCP domain.

Belongs to the CRISP family. As to expression, expressed in salivary glands.

Its subcellular location is the secreted. In terms of biological role, inhibits platelet aggregation induced by all agonists tested (ADP, arachidonic acid, the thromboxane A2 analog U46619, thrombin, and snake venom snaclecs (TMVA that activates platelet through GPIB, and stejnulxin that specifically acts through GPVI (GP6))). May act by competing with fibrinogen for binding to glycoprotein IIb/IIIa (ITGA2B/ITGB3). In Tabanus yao (Horsefly), this protein is Tabinhibitin 2.